We begin with the raw amino-acid sequence, 635 residues long: Bifunctional lysine-specific demethylase and histidyl-hydroxylase NO66 (635 aa).

Disordered regions lie at residues 1–115 and 141–190; these read MSAV…LQNS and FNGE…KANG. Residues 84–99 show a composition bias toward low complexity; it reads ASASDINTSASKNVNA. Positions 141-156 are enriched in polar residues; it reads FNGESLKNNSNHSTPV. The JmjC domain occupies 295-440; that stretch reads CSIRMLNPQT…DLLELFFPHA (146 aa). Fe cation contacts are provided by His-341, Asp-343, and His-406.

Belongs to the ROX family. NO66 subfamily. The cofactor is Fe(2+).

It localises to the nucleus. It carries out the reaction N(6),N(6)-dimethyl-L-lysyl(36)-[histone H3] + 2 2-oxoglutarate + 2 O2 = L-lysyl(36)-[histone H3] + 2 formaldehyde + 2 succinate + 2 CO2. Oxygenase that can act as both a histone lysine demethylase and a ribosomal histidine hydroxylase. Specifically demethylates 'Lys-4' (H3K4me) and 'Lys-36' (H3K36me) of histone H3, thereby playing a central role in histone code. The polypeptide is Bifunctional lysine-specific demethylase and histidyl-hydroxylase NO66 (Aedes aegypti (Yellowfever mosquito)).